The primary structure comprises 923 residues: Hexokinase-3 (923 aa).

The span at 1 to 18 shows a compositional bias: polar residues; that stretch reads MDSIGSSGLRQGEETLSC. The disordered stretch occupies residues 1–30; the sequence is MDSIGSSGLRQGEETLSCSEEGLPGPSDSS. Hexokinase domains follow at residues 27–471 and 477–912; these read SDSS…MVTA and AAHR…LVTA. Residues 84 to 220 are hexokinase small subdomain 1; sequence HGTEQGDFVV…AYNIDVVAVV (137 aa). 95–102 lines the ATP pocket; sequence ELGATGAS. D-glucose 6-phosphate is bound at residue 95–104; the sequence is ELGATGASLR. Residues S168, 185-186, and 221-222 contribute to the D-glucose site; these read TK and ND. The interval 221-460 is hexokinase large subdomain 1; that stretch reads NDTVGTMMGC…CDVSLIPSVD (240 aa). 2 residues coordinate D-glucose 6-phosphate: D222 and T245. Residues N248, E273, and 304–307 each bind D-glucose; that span reads QRFE. 426–428 provides a ligand contact to D-glucose 6-phosphate; the sequence is GGR. ATP contacts are provided by residues 438–439 and 542–547; these read SV and DLGGTN. A hexokinase small subdomain 2 region spans residues 531–661; the sequence is DGSERGDFLA…AVELNVVAIV (131 aa). 542 to 546 is a D-glucose 6-phosphate binding site; that stretch reads DLGGT. D-glucose is bound by residues 609–610, 626–627, and 662–663; these read SF, TK, and ND. Positions 662-901 are hexokinase large subdomain 2; it reads NDTVGTMMSC…CVVTFLQSED (240 aa). The D-glucose 6-phosphate site is built by D663 and T686. An ATP-binding site is contributed by T686. D-glucose-binding positions include 688 to 689, E714, and E748; that span reads TN. ATP contacts are provided by residues 753-754, 790-794, and 869-873; these read GM, TKFLS, and TLYKL. Residues 867–869 and S903 contribute to the D-glucose 6-phosphate site; that span reads DGT.

Belongs to the hexokinase family.

The catalysed reaction is a D-hexose + ATP = a D-hexose 6-phosphate + ADP + H(+). The enzyme catalyses D-fructose + ATP = D-fructose 6-phosphate + ADP + H(+). It catalyses the reaction D-glucose + ATP = D-glucose 6-phosphate + ADP + H(+). Its pathway is carbohydrate metabolism; hexose metabolism. The protein operates within carbohydrate degradation; glycolysis; D-glyceraldehyde 3-phosphate and glycerone phosphate from D-glucose: step 1/4. Its activity is regulated as follows. Hexokinase is an allosteric enzyme inhibited by its product D-glucose 6-phosphate. Its function is as follows. Catalyzes the phosphorylation of hexose, such as D-glucose and D-fructose, to hexose 6-phosphate (D-glucose 6-phosphate and D-fructose 6-phosphate, respectively). Mediates the initial step of glycolysis by catalyzing phosphorylation of D-glucose to D-glucose 6-phosphate. The polypeptide is Hexokinase-3 (Homo sapiens (Human)).